The sequence spans 486 residues: Ribulose bisphosphate carboxylase large chain, plasmid (486 aa).

Positions 126 and 176 each coordinate substrate. K178 functions as the Proton acceptor in the catalytic mechanism. Position 180 (K180) interacts with substrate. 3 residues coordinate Mg(2+): K204, D206, and E207. K204 is modified (N6-carboxylysine). Catalysis depends on H296, which acts as the Proton acceptor. Substrate is bound by residues R297, H329, and S381.

The protein belongs to the RuBisCO large chain family. Type I subfamily. In terms of assembly, heterohexadecamer of 8 large chains and 8 small chains. The cofactor is Mg(2+).

It catalyses the reaction 2 (2R)-3-phosphoglycerate + 2 H(+) = D-ribulose 1,5-bisphosphate + CO2 + H2O. It carries out the reaction D-ribulose 1,5-bisphosphate + O2 = 2-phosphoglycolate + (2R)-3-phosphoglycerate + 2 H(+). RuBisCO catalyzes two reactions: the carboxylation of D-ribulose 1,5-bisphosphate, the primary event in carbon dioxide fixation, as well as the oxidative fragmentation of the pentose substrate. Both reactions occur simultaneously and in competition at the same active site. In Cupriavidus necator (strain ATCC 17699 / DSM 428 / KCTC 22496 / NCIMB 10442 / H16 / Stanier 337) (Ralstonia eutropha), this protein is Ribulose bisphosphate carboxylase large chain, plasmid (cbbL2).